A 186-amino-acid polypeptide reads, in one-letter code: Ribosome-recycling factor (186 aa).

It belongs to the RRF family.

It localises to the cytoplasm. Responsible for the release of ribosomes from messenger RNA at the termination of protein biosynthesis. May increase the efficiency of translation by recycling ribosomes from one round of translation to another. This Albidiferax ferrireducens (strain ATCC BAA-621 / DSM 15236 / T118) (Rhodoferax ferrireducens) protein is Ribosome-recycling factor.